The chain runs to 1407 residues: DNA-directed RNA polymerase subunit beta' (1407 aa).

C70, C72, C85, and C88 together coordinate Zn(2+). Residues D460, D462, and D464 each contribute to the Mg(2+) site. Zn(2+) is bound by residues C814, C888, C895, and C898. An N6-acetyllysine modification is found at K972.

It belongs to the RNA polymerase beta' chain family. The RNAP catalytic core consists of 2 alpha, 1 beta, 1 beta' and 1 omega subunit. When a sigma factor is associated with the core the holoenzyme is formed, which can initiate transcription. Mg(2+) is required as a cofactor. Zn(2+) serves as cofactor.

It catalyses the reaction RNA(n) + a ribonucleoside 5'-triphosphate = RNA(n+1) + diphosphate. Functionally, DNA-dependent RNA polymerase catalyzes the transcription of DNA into RNA using the four ribonucleoside triphosphates as substrates. This Shigella boydii serotype 18 (strain CDC 3083-94 / BS512) protein is DNA-directed RNA polymerase subunit beta'.